Here is a 30-residue protein sequence, read N- to C-terminus: Trypsin inhibitor 4 (30 aa).

3 disulfides stabilise this stretch: C3-C20, C10-C22, and C16-C28.

This sequence belongs to the protease inhibitor I7 (squash-type serine protease inhibitor) family.

Its subcellular location is the secreted. Inhibits trypsin; probably participates in a plant defense mechanism. The chain is Trypsin inhibitor 4 from Momordica charantia (Bitter gourd).